The primary structure comprises 221 residues: Translation initiation factor 6 (221 aa).

The protein belongs to the eIF-6 family.

Its function is as follows. Binds to the 50S ribosomal subunit and prevents its association with the 30S ribosomal subunit to form the 70S initiation complex. The sequence is that of Translation initiation factor 6 from Natronomonas pharaonis (strain ATCC 35678 / DSM 2160 / CIP 103997 / JCM 8858 / NBRC 14720 / NCIMB 2260 / Gabara) (Halobacterium pharaonis).